The primary structure comprises 154 residues: Toxin YhaV (154 aa).

In terms of assembly, homohexamer; forms a complex with PrlF (SohA) with stoichiometry PrlF(2)-YhaV(4), possibly as a YhaV(2)-PrlF(2)-YhaV(2) complex like the MazFE complex. May dimerize in solution.

Toxic component of a type II toxin-antitoxin (TA) system. Has RNase activity in vitro. Acts as a transcription factor. The YhaV/PrlF complex binds the prlF-yhaV operon, probably negatively regulating its expression. The polypeptide is Toxin YhaV (yhaV) (Escherichia coli O157:H7).